The sequence spans 353 residues: Photosystem II protein D1 (353 aa).

Threonine 2 bears the N-acetylthreonine mark. Phosphothreonine is present on threonine 2. A run of 3 helical transmembrane segments spans residues 29–46, 118–133, and 142–156; these read YIGWFGVIMIPCLLTAIS, HFLLGIACYMGREWEL, and WIAVAYSAPVAAATA. Histidine 118 contributes to the chlorophyll a binding site. Position 126 (tyrosine 126) interacts with pheophytin a. Positions 170 and 189 each coordinate [CaMn4O5] cluster. The chain crosses the membrane as a helical span at residues 197 to 218; sequence FHMLGVAGVFGGSLFSAMHGSL. Histidine 198 is a chlorophyll a binding site. A quinone-binding positions include histidine 215 and 264–265; that span reads SF. Histidine 215 is a Fe cation binding site. A Fe cation-binding site is contributed by histidine 272. The helical transmembrane segment at 274-288 threads the bilayer; that stretch reads FLAVWPVVGIWFTAM. Residues histidine 332, glutamate 333, aspartate 342, and alanine 344 each contribute to the [CaMn4O5] cluster site. Positions 345–353 are excised as a propeptide; sequence SVEAPAVNG.

Belongs to the reaction center PufL/M/PsbA/D family. As to quaternary structure, PSII is composed of 1 copy each of membrane proteins PsbA, PsbB, PsbC, PsbD, PsbE, PsbF, PsbH, PsbI, PsbJ, PsbK, PsbL, PsbM, PsbT, PsbX, PsbY, PsbZ, Psb30/Ycf12, at least 3 peripheral proteins of the oxygen-evolving complex and a large number of cofactors. It forms dimeric complexes. It depends on The D1/D2 heterodimer binds P680, chlorophylls that are the primary electron donor of PSII, and subsequent electron acceptors. It shares a non-heme iron and each subunit binds pheophytin, quinone, additional chlorophylls, carotenoids and lipids. D1 provides most of the ligands for the Mn4-Ca-O5 cluster of the oxygen-evolving complex (OEC). There is also a Cl(-1) ion associated with D1 and D2, which is required for oxygen evolution. The PSII complex binds additional chlorophylls, carotenoids and specific lipids. as a cofactor. In terms of processing, tyr-161 forms a radical intermediate that is referred to as redox-active TyrZ, YZ or Y-Z. Post-translationally, C-terminally processed by CTPA; processing is essential to allow assembly of the oxygen-evolving complex and thus photosynthetic growth.

Its subcellular location is the plastid. The protein localises to the chloroplast thylakoid membrane. It catalyses the reaction 2 a plastoquinone + 4 hnu + 2 H2O = 2 a plastoquinol + O2. Photosystem II (PSII) is a light-driven water:plastoquinone oxidoreductase that uses light energy to abstract electrons from H(2)O, generating O(2) and a proton gradient subsequently used for ATP formation. It consists of a core antenna complex that captures photons, and an electron transfer chain that converts photonic excitation into a charge separation. The D1/D2 (PsbA/PsbD) reaction center heterodimer binds P680, the primary electron donor of PSII as well as several subsequent electron acceptors. The polypeptide is Photosystem II protein D1 (Mesostigma viride (Green alga)).